A 417-amino-acid polypeptide reads, in one-letter code: MIDSILFDLIEREVKREKENIELIASENFVSSDVRRAVGSILTNKYAEGYPSKRYYGGCFVVDDIESLAISRARELFGANYANVQPHSGSQANMAAIMALIKPGDRILGMELSHGGHLTHGSKVSFSGMFFDAYSYGVSRESEMIDYDDVRKIAKECRPNLIIAGASSYSREIDFKKFREIADEVSAYLLCDVAHTAGLIATGFHNSPIDVAHLTTSTTHKTLRGPRGGLILAGRESSIIVNYNNKERRLEDAVNSCVFPGTQGGPLMHVIAGKAVAFREALMEDFKDYISRVISNTKAMAECFISEGFRIVSGGTDNHLFLVDLGILGITGADAEKVLERVNITLNKNAIPFDSKNPSVTSGIRIGAAAITSRGLNRDDSIRVAHFVIRALKTKSEDELKKIKRDVIEFISSFDMP.

(6S)-5,6,7,8-tetrahydrofolate contacts are provided by residues leucine 112 and 116-118; that span reads GHL. An N6-(pyridoxal phosphate)lysine modification is found at lysine 221. Glutamate 247 is a binding site for (6S)-5,6,7,8-tetrahydrofolate.

The protein belongs to the SHMT family. As to quaternary structure, homodimer. The cofactor is pyridoxal 5'-phosphate.

It localises to the cytoplasm. The enzyme catalyses (6R)-5,10-methylene-5,6,7,8-tetrahydrofolate + glycine + H2O = (6S)-5,6,7,8-tetrahydrofolate + L-serine. Its pathway is one-carbon metabolism; tetrahydrofolate interconversion. It functions in the pathway amino-acid biosynthesis; glycine biosynthesis; glycine from L-serine: step 1/1. Its function is as follows. Catalyzes the reversible interconversion of serine and glycine with tetrahydrofolate (THF) serving as the one-carbon carrier. This reaction serves as the major source of one-carbon groups required for the biosynthesis of purines, thymidylate, methionine, and other important biomolecules. Also exhibits THF-independent aldolase activity toward beta-hydroxyamino acids, producing glycine and aldehydes, via a retro-aldol mechanism. This is Serine hydroxymethyltransferase from Borrelia hermsii (strain HS1 / DAH).